The following is a 357-amino-acid chain: RNA-binding protein 4B (357 aa).

2 consecutive RRM domains span residues 2 to 72 and 78 to 148; these read VKLF…ASKN and TKLH…LSTS. The CCHC-type zinc finger occupies 160–177; the sequence is SGCYRCGKEGHWSKECPV. Residues 196 to 357 form an interaction with TNPO3 region; it reads AVRTPYTMGY…YVDRTRYSAF (162 aa).

As to quaternary structure, interacts with TNPO3, which may mediate nuclear import of the protein. As to expression, expressed in the suprachiasmatic nucleus (SCN) (at protein level). Expressed in the suprachiasmatic nucleus (SCN).

The protein localises to the nucleus. It is found in the nucleolus. In terms of biological role, required for the translational activation of PER1 mRNA in response to circadian clock. Binds directly to the 3'-UTR of the PER1 mRNA. In Mus musculus (Mouse), this protein is RNA-binding protein 4B (Rbm4b).